A 1126-amino-acid chain; its full sequence is Protein translocase subunit SecA (1126 aa).

Residues Gln175, 193–197, and Asp694 contribute to the ATP site; that span reads GEGKT. Residues 1060–1126 are disordered; that stretch reads VQEAAPEKHE…KYKNCHGQGL (67 aa). Positions 1064–1080 are enriched in basic and acidic residues; the sequence is APEKHEDMSRYRTEKTD. The Zn(2+) site is built by Cys1110, Cys1112, Cys1121, and His1122.

The protein belongs to the SecA family. Monomer and homodimer. Part of the essential Sec protein translocation apparatus which comprises SecA, SecYEG and auxiliary proteins SecDF. Other proteins may also be involved. Zn(2+) serves as cofactor.

It localises to the cell inner membrane. It is found in the cytoplasm. The enzyme catalyses ATP + H2O + cellular proteinSide 1 = ADP + phosphate + cellular proteinSide 2.. Its function is as follows. Part of the Sec protein translocase complex. Interacts with the SecYEG preprotein conducting channel. Has a central role in coupling the hydrolysis of ATP to the transfer of proteins into and across the cell membrane, serving as an ATP-driven molecular motor driving the stepwise translocation of polypeptide chains across the membrane. The chain is Protein translocase subunit SecA from Parabacteroides distasonis (strain ATCC 8503 / DSM 20701 / CIP 104284 / JCM 5825 / NCTC 11152).